Reading from the N-terminus, the 194-residue chain is Peptidyl-tRNA hydrolase (194 aa).

TRNA is bound at residue tyrosine 16. Histidine 21 (proton acceptor) is an active-site residue. Tyrosine 67, asparagine 69, and asparagine 115 together coordinate tRNA.

The protein belongs to the PTH family. Monomer.

The protein resides in the cytoplasm. It catalyses the reaction an N-acyl-L-alpha-aminoacyl-tRNA + H2O = an N-acyl-L-amino acid + a tRNA + H(+). Functionally, hydrolyzes ribosome-free peptidyl-tRNAs (with 1 or more amino acids incorporated), which drop off the ribosome during protein synthesis, or as a result of ribosome stalling. Its function is as follows. Catalyzes the release of premature peptidyl moieties from peptidyl-tRNA molecules trapped in stalled 50S ribosomal subunits, and thus maintains levels of free tRNAs and 50S ribosomes. The chain is Peptidyl-tRNA hydrolase from Synechocystis sp. (strain ATCC 27184 / PCC 6803 / Kazusa).